A 238-amino-acid polypeptide reads, in one-letter code: tRNA (guanine-N(7)-)-methyltransferase (238 aa).

S-adenosyl-L-methionine contacts are provided by Glu-68, Glu-93, Asp-120, and Asp-143. Asp-143 is a catalytic residue. Substrate-binding positions include Lys-147, Asp-179, and 216–219 (TKFE).

It belongs to the class I-like SAM-binding methyltransferase superfamily. TrmB family.

It catalyses the reaction guanosine(46) in tRNA + S-adenosyl-L-methionine = N(7)-methylguanosine(46) in tRNA + S-adenosyl-L-homocysteine. Its pathway is tRNA modification; N(7)-methylguanine-tRNA biosynthesis. In terms of biological role, catalyzes the formation of N(7)-methylguanine at position 46 (m7G46) in tRNA. In Shewanella frigidimarina (strain NCIMB 400), this protein is tRNA (guanine-N(7)-)-methyltransferase.